The primary structure comprises 376 residues: Na(+)/H(+) antiporter NhaA (376 aa).

Transmembrane regions (helical) follow at residues 8-28 (FLAT…AAML), 49-69 (LSLL…LVGL), 87-107 (ILPC…YLAF), 117-137 (GWAI…ALLG), 140-160 (APAS…MGAV), 162-182 (IIAL…AIVI), 209-229 (LAVL…ALAI), 248-268 (PWVA…VSFA), 270-290 (IGAE…LFLG), 321-341 (GVAL…GLAF), and 349-369 (EVKI…YALL).

It belongs to the NhaA Na(+)/H(+) (TC 2.A.33) antiporter family.

It localises to the cell inner membrane. It carries out the reaction Na(+)(in) + 2 H(+)(out) = Na(+)(out) + 2 H(+)(in). Functionally, na(+)/H(+) antiporter that extrudes sodium in exchange for external protons. In Rhizorhabdus wittichii (strain DSM 6014 / CCUG 31198 / JCM 15750 / NBRC 105917 / EY 4224 / RW1) (Sphingomonas wittichii), this protein is Na(+)/H(+) antiporter NhaA.